We begin with the raw amino-acid sequence, 593 residues long: A-type ATP synthase subunit A (593 aa).

Residue 236–243 (GPFGSGKT) coordinates ATP.

Belongs to the ATPase alpha/beta chains family. Has multiple subunits with at least A(3), B(3), C, D, E, F, H, I and proteolipid K(x).

It localises to the cell membrane. It catalyses the reaction ATP + H2O + 4 H(+)(in) = ADP + phosphate + 5 H(+)(out). Component of the A-type ATP synthase that produces ATP from ADP in the presence of a proton gradient across the membrane. The A chain is the catalytic subunit. This chain is A-type ATP synthase subunit A, found in Pyrobaculum arsenaticum (strain DSM 13514 / JCM 11321 / PZ6).